Reading from the N-terminus, the 433-residue chain is Malate synthase (433 aa).

Residue 16-17 participates in acetyl-CoA binding; that stretch reads TS. Mg(2+) is bound at residue Asp52. Arg84 provides a ligand contact to acetyl-CoA. Glyoxylate is bound by residues Arg84, Glu158, and 191–192; that span reads VD. Positions 158 and 192 each coordinate Mg(2+). 2 residues coordinate acetyl-CoA: Arg236 and Leu259. The active-site Proton acceptor is Asp388.

It belongs to the HpcH/HpaI aldolase family. Homotrimer and homohexamer in equilibrium. Mg(2+) serves as cofactor.

The protein resides in the cytoplasm. The enzyme catalyses glyoxylate + acetyl-CoA + H2O = (S)-malate + CoA + H(+). It functions in the pathway carbohydrate metabolism; glyoxylate cycle; (S)-malate from isocitrate: step 2/2. Involved in the glyoxylate cycle which synthesizes precursors for carbohydrates from C2 compounds such as acetate. Catalyzes the Claisen condensation between acetyl-coenzyme A (acetyl-CoA) and glyoxylate to form the malyl-CoA intermediate that is subsequently hydrolyzed to produce malate and CoA. The protein is Malate synthase (aceB) of Haloferax volcanii (strain ATCC 29605 / DSM 3757 / JCM 8879 / NBRC 14742 / NCIMB 2012 / VKM B-1768 / DS2) (Halobacterium volcanii).